A 189-amino-acid chain; its full sequence is UPF0251 protein MTH_1178 (189 aa).

The protein belongs to the UPF0251 family.

In Methanothermobacter thermautotrophicus (strain ATCC 29096 / DSM 1053 / JCM 10044 / NBRC 100330 / Delta H) (Methanobacterium thermoautotrophicum), this protein is UPF0251 protein MTH_1178.